A 441-amino-acid polypeptide reads, in one-letter code: 23S rRNA (uracil(1939)-C(5))-methyltransferase RlmD (441 aa).

The TRAM domain occupies 1 to 56 (MSIDSLDMEARGVGRLLNEDGTPGKVIFVEGALPGETVSYRSFRRKPSYEQAHLVE). The [4Fe-4S] cluster site is built by C69, C75, C78, and C157. 6 residues coordinate S-adenosyl-L-methionine: Q265, F294, N299, E315, N343, and D364. C397 acts as the Nucleophile in catalysis.

It belongs to the class I-like SAM-binding methyltransferase superfamily. RNA M5U methyltransferase family. RlmD subfamily.

It catalyses the reaction uridine(1939) in 23S rRNA + S-adenosyl-L-methionine = 5-methyluridine(1939) in 23S rRNA + S-adenosyl-L-homocysteine + H(+). Catalyzes the formation of 5-methyl-uridine at position 1939 (m5U1939) in 23S rRNA. This Cupriavidus necator (strain ATCC 17699 / DSM 428 / KCTC 22496 / NCIMB 10442 / H16 / Stanier 337) (Ralstonia eutropha) protein is 23S rRNA (uracil(1939)-C(5))-methyltransferase RlmD.